The chain runs to 182 residues: uncharacterized protein (182 aa).

The protein to M.tuberculosis Rv2313c.

This is an uncharacterized protein from Escherichia coli (strain K12).